Reading from the N-terminus, the 242-residue chain is DNA repair protein RecO (242 aa).

The protein belongs to the RecO family.

Functionally, involved in DNA repair and RecF pathway recombination. This Methylococcus capsulatus (strain ATCC 33009 / NCIMB 11132 / Bath) protein is DNA repair protein RecO.